Consider the following 230-residue polypeptide: Uracil-DNA glycosylase (230 aa).

Asp-70 functions as the Proton acceptor in the catalytic mechanism.

This sequence belongs to the uracil-DNA glycosylase (UDG) superfamily. UNG family.

The protein resides in the cytoplasm. The catalysed reaction is Hydrolyzes single-stranded DNA or mismatched double-stranded DNA and polynucleotides, releasing free uracil.. Excises uracil residues from the DNA which can arise as a result of misincorporation of dUMP residues by DNA polymerase or due to deamination of cytosine. This Pseudomonas syringae pv. syringae (strain B728a) protein is Uracil-DNA glycosylase.